A 374-amino-acid polypeptide reads, in one-letter code: Potassium channel subfamily K member 9 (374 aa).

At 1 to 8 the chain is on the cytoplasmic side; the sequence is MKRQNVRT. A helical transmembrane segment spans residues 9-29; it reads LSLIVCTFTYLLVGAAVFDAL. The Extracellular portion of the chain corresponds to 30 to 88; it reads ESDHEMREEEKLKAEEIRIKGKYNISSEDYRQLELVILQSEPHRAGVQWKFAGSFYFAI. N-linked (GlcNAc...) asparagine glycosylation is present at asparagine 53. An intramembrane region (pore-forming) is located at residues 89 to 101; the sequence is TVITTIGYGHAAP. K(+)-binding residues include threonine 93, isoleucine 94, glycine 95, and tyrosine 96. The selectivity filter 1 stretch occupies residues 93-98; that stretch reads TIGYGH. The Extracellular portion of the chain corresponds to 102–107; the sequence is GTDAGK. Residues 108-128 traverse the membrane as a helical segment; the sequence is AFCMFYAVLGIPLTLVMFQSL. At 129-158 the chain is on the cytoplasmic side; sequence GERMNTFVRYLLKRIKKCCGMRNTDVSMEN. Residues 159–179 form a helical membrane-spanning segment; it reads MVTVGFFSCMGTLCIGAAAFS. At 180–194 the chain is on the extracellular side; sequence QCEEWSFFHAYYYCF. The segment at residues 195-207 is an intramembrane region (pore-forming); it reads ITLTTIGFGDYVA. Residues threonine 199, isoleucine 200, glycine 201, and phenylalanine 202 each contribute to the K(+) site. The tract at residues 199–204 is selectivity filter 2; sequence TIGFGD. Topologically, residues 208–218 are extracellular; it reads LQTKGALQKKP. A helical membrane pass occupies residues 219-239; sequence LYVAFSFMYILVGLTVIGAFL. Residues 240-374 are Cytoplasmic-facing; the sequence is NLVVLRFLTM…QRLMKRRKSV (135 aa). The X-gate stretch occupies residues 243–248; that stretch reads VLRFLT.

This sequence belongs to the two pore domain potassium channel (TC 1.A.1.8) family. In terms of assembly, homodimer. Heterodimer with KCNK1. Heterodimer with KCNK3. Mainly found in the cerebellum. Also found in adrenal gland, kidney and lung.

The protein localises to the cell membrane. It is found in the mitochondrion inner membrane. The protein resides in the cell projection. It localises to the dendrite. It carries out the reaction K(+)(in) = K(+)(out). It catalyses the reaction Na(+)(in) = Na(+)(out). With respect to regulation, inhibited by extracellular acidification adopting a nonconductive conformation at pH 6.0. Inhibited by phorbol 12-myristate 13-acetate (PMA). K(+) channel that conducts voltage-dependent outward rectifying currents upon membrane depolarization. Voltage sensing is coupled to K(+) electrochemical gradient in an 'ion flux gating' mode where outward but not inward ion flow opens the gate. Changes ion selectivity and becomes permeable to Na(+) ions in response to extracellular acidification. Protonation of the pH sensor His-98 stabilizes C-type inactivation conformation likely converting the channel from outward K(+)-conducting, to inward Na(+)-conducting to nonconductive state. Homo- and heterodimerizes to form functional channels with distinct regulatory and gating properties. Allows K(+) currents with fast-gating kinetics important for the repolarization and hyperpolarization phases of action potentials. In granule neurons, hyperpolarizes the resting membrane potential to limit intrinsic neuronal excitability, but once the action potential threshold is reached, supports high-frequency action potential firing and increased neuronal excitability. Homomeric and/or heteromeric KCNK3:KCNK9 channels operate in cerebellar granule cells, whereas heteromeric KCNK1:KCNK9 enables currents in hippocampal dentate gyrus granule neurons. Dispensable for central chemosensory respiration i.e. breathing controlled by brainstem CO2/pH, it rather conducts pH-sensitive currents and controls the firing rate of serotonergic raphe neurons involved in potentiation of the respiratory chemoreflex. In retinal ganglion cells, mediates outward currents that regulate action potentials in response to acidification of the synaptic cleft. Involved in transmission of image-forming and nonimage-forming visual information in the retina. In adrenal gland, contributes to the maintenance of a hyperpolarized resting membrane potential of aldosterone-producing cells at zona glomerulosa and limits aldosterone release as part of a regulatory mechanism that controls arterial blood pressure and electrolyte homeostasis. This Homo sapiens (Human) protein is Potassium channel subfamily K member 9.